We begin with the raw amino-acid sequence, 181 residues long: TATA-box-binding protein (181 aa).

2 repeat units span residues 7–83 (IVNV…MEYL) and 98–173 (VQNM…KNTV).

This sequence belongs to the TBP family.

In terms of biological role, general factor that plays a role in the activation of archaeal genes transcribed by RNA polymerase. Binds specifically to the TATA box promoter element which lies close to the position of transcription initiation. This is TATA-box-binding protein from Methanococcus aeolicus (strain ATCC BAA-1280 / DSM 17508 / OCM 812 / Nankai-3).